The primary structure comprises 69 residues: Cold shock-like protein CspE (69 aa).

In terms of domain architecture, CSD spans 6–66; the sequence is GNVKWFNESK…GAKGPSAANV (61 aa).

It is found in the cytoplasm. The chain is Cold shock-like protein CspE (cspE) from Escherichia coli O6:H1 (strain CFT073 / ATCC 700928 / UPEC).